The chain runs to 392 residues: Chorismate synthase (392 aa).

The NADP(+) site is built by Arg39 and Arg45. FMN-binding positions include 131 to 133 (RSS), 255 to 256 (NA), Gly300, 315 to 319 (KPIPT), and Arg341.

The protein belongs to the chorismate synthase family. In terms of assembly, homotetramer. FMNH2 serves as cofactor.

It carries out the reaction 5-O-(1-carboxyvinyl)-3-phosphoshikimate = chorismate + phosphate. It functions in the pathway metabolic intermediate biosynthesis; chorismate biosynthesis; chorismate from D-erythrose 4-phosphate and phosphoenolpyruvate: step 7/7. Its function is as follows. Catalyzes the anti-1,4-elimination of the C-3 phosphate and the C-6 proR hydrogen from 5-enolpyruvylshikimate-3-phosphate (EPSP) to yield chorismate, which is the branch point compound that serves as the starting substrate for the three terminal pathways of aromatic amino acid biosynthesis. This reaction introduces a second double bond into the aromatic ring system. The polypeptide is Chorismate synthase (Leuconostoc mesenteroides subsp. mesenteroides (strain ATCC 8293 / DSM 20343 / BCRC 11652 / CCM 1803 / JCM 6124 / NCDO 523 / NBRC 100496 / NCIMB 8023 / NCTC 12954 / NRRL B-1118 / 37Y)).